The chain runs to 450 residues: 3-phosphoshikimate 1-carboxyvinyltransferase (450 aa).

Residues K28, S29, and R33 each contribute to the 3-phosphoshikimate site. K28 provides a ligand contact to phosphoenolpyruvate. The phosphoenolpyruvate site is built by G100 and R128. Residues S173, Q175, D326, and K353 each coordinate 3-phosphoshikimate. Q175 is a binding site for phosphoenolpyruvate. D326 acts as the Proton acceptor in catalysis. Phosphoenolpyruvate is bound by residues R357 and R402.

The protein belongs to the EPSP synthase family. As to quaternary structure, monomer.

The protein resides in the cytoplasm. It carries out the reaction 3-phosphoshikimate + phosphoenolpyruvate = 5-O-(1-carboxyvinyl)-3-phosphoshikimate + phosphate. It participates in metabolic intermediate biosynthesis; chorismate biosynthesis; chorismate from D-erythrose 4-phosphate and phosphoenolpyruvate: step 6/7. In terms of biological role, catalyzes the transfer of the enolpyruvyl moiety of phosphoenolpyruvate (PEP) to the 5-hydroxyl of shikimate-3-phosphate (S3P) to produce enolpyruvyl shikimate-3-phosphate and inorganic phosphate. This Brucella melitensis biotype 2 (strain ATCC 23457) protein is 3-phosphoshikimate 1-carboxyvinyltransferase.